The sequence spans 340 residues: Selenide, water dikinase (340 aa).

The active site involves C13. Residues K16 and 43-45 each bind ATP; that span reads ASD. D46 contributes to the Mg(2+) binding site. ATP-binding positions include D63, D86, and 133-135; that span reads GHS. Position 86 (D86) interacts with Mg(2+). D221 contacts Mg(2+).

It belongs to the selenophosphate synthase 1 family. Class I subfamily. Homodimer. Mg(2+) serves as cofactor.

It catalyses the reaction hydrogenselenide + ATP + H2O = selenophosphate + AMP + phosphate + 2 H(+). Synthesizes selenophosphate from selenide and ATP. The chain is Selenide, water dikinase from Desulfitobacterium hafniense (strain Y51).